A 471-amino-acid polypeptide reads, in one-letter code: ATP synthase subunit beta (471 aa).

154–161 lines the ATP pocket; it reads GGAGVGKT.

It belongs to the ATPase alpha/beta chains family. F-type ATPases have 2 components, CF(1) - the catalytic core - and CF(0) - the membrane proton channel. CF(1) has five subunits: alpha(3), beta(3), gamma(1), delta(1), epsilon(1). CF(0) has three main subunits: a(1), b(2) and c(9-12). The alpha and beta chains form an alternating ring which encloses part of the gamma chain. CF(1) is attached to CF(0) by a central stalk formed by the gamma and epsilon chains, while a peripheral stalk is formed by the delta and b chains.

It localises to the cell membrane. The enzyme catalyses ATP + H2O + 4 H(+)(in) = ADP + phosphate + 5 H(+)(out). In terms of biological role, produces ATP from ADP in the presence of a proton gradient across the membrane. The catalytic sites are hosted primarily by the beta subunits. This chain is ATP synthase subunit beta, found in Mesomycoplasma hyopneumoniae (strain J / ATCC 25934 / NCTC 10110) (Mycoplasma hyopneumoniae).